A 331-amino-acid chain; its full sequence is Probable allantoicase (331 aa).

Belongs to the allantoicase family.

It catalyses the reaction allantoate + H2O = (S)-ureidoglycolate + urea. It participates in nitrogen metabolism; (S)-allantoin degradation; (S)-ureidoglycolate from allantoate (aminidohydrolase route): step 1/1. The sequence is that of Probable allantoicase from Pseudomonas fluorescens (strain ATCC BAA-477 / NRRL B-23932 / Pf-5).